A 185-amino-acid chain; its full sequence is Translation initiation factor IF-3, chloroplastic (185 aa).

This sequence belongs to the IF-3 family. In terms of assembly, monomer.

It localises to the plastid. It is found in the chloroplast. Its function is as follows. IF-3 binds to the 30S ribosomal subunit and shifts the equilibrium between 70S ribosomes and their 50S and 30S subunits in favor of the free subunits, thus enhancing the availability of 30S subunits on which protein synthesis initiation begins. The chain is Translation initiation factor IF-3, chloroplastic from Cyanidium caldarium (Red alga).